The chain runs to 481 residues: MADMPSGESCTSPLELFNSIATQGELVRSLKAGNAPKDEIDSAVKMLLSLKMSYKAAMGEEYKAGCPPGNPTAGRNCDSDATKASEDFVDPWTVRTSSAKGIDYDKLIVQFGSSKIDKELINRIERATGQRPHRFLRRGIFFSHRDMNQILDAYENKKPFYLYTGRGPSSEAMHLGHLVPFIFTKWLQDVFNVPLVIQMSDDEKYLWKDLTLEQAYSYTVENAKDIIACGFDINKTFIFSDLEYMGQSPGFYRNVVKIQKHVTFNQVKGIFGFTDSDCIGKISFPAVQAAPSFSNSFPKIFRDRTDIQCLIPCAIDQDPYFRMTRDVAPRIGHPKPALLHSTFFPALQGAQTKMSASDPNSSIFLTDTAKQIKSKVNKHAFSGGRDTVEEHRQFGGNCEVDVSFMYLTFFLEDDDRLEQIRKDYTSGAMLTGELKKTLIDVLQPLIAEHQARRKAVTEETVKEFMTPRQLSFHFQCFCFDT.

A WHEP-TRS domain is found at 12 to 68; the sequence is SPLELFNSIATQGELVRSLKAGNAPKDEIDSAVKMLLSLKMSYKAAMGEEYKAGCPP. Position 158 is an N6-succinyllysine (lysine 158). The short motif at 168-177 is the 'HIGH' region element; it reads PSSEAMHLGH. The short motif at 353–357 is the 'KMSKS' region element; it reads KMSAS. A Phosphoserine modification is found at serine 355.

This sequence belongs to the class-I aminoacyl-tRNA synthetase family. As to quaternary structure, homodimer. Interacts with oxidized form of GAPDH. Proteolytic cleavage generates 2 forms; T1-TrpRS and T2-TrpRS. As to expression, isoform 2 is widely expressed, isoform 1 is found only in embryonic stem cells.

The protein localises to the cytoplasm. It carries out the reaction tRNA(Trp) + L-tryptophan + ATP = L-tryptophyl-tRNA(Trp) + AMP + diphosphate + H(+). In terms of biological role, catalyzes the attachment of tryptophan to tRNA(Trp) in a two-step reaction: tryptophan is first activated by ATP to form Trp-AMP and then transferred to the acceptor end of the tRNA(Trp). Could also possess an angiostatic activity. The sequence is that of Tryptophan--tRNA ligase, cytoplasmic from Mus musculus (Mouse).